We begin with the raw amino-acid sequence, 429 residues long: 4-hydroxyphenylacetate degradation bifunctional isomerase/decarboxylase (429 aa).

2 Approximate repeats span residues Met1–Phe215 and Thr216–Asn429. The a divalent metal cation site is built by Glu276, Glu278, and Asp307.

It belongs to the FAH family. Monomer. Mg(2+) is required as a cofactor.

It catalyses the reaction (2E,4Z)-5-hydroxypenta-2,4-diene-1,2,5-tricarboxylate = (3E,5R)-5-carboxy-2-oxohept-3-enedioate. The catalysed reaction is (3E,5R)-5-carboxy-2-oxohept-3-enedioate + H(+) = (4Z)-2-oxohept-4-enedioate + CO2. It functions in the pathway aromatic compound metabolism; 4-hydroxyphenylacetate degradation; pyruvate and succinate semialdehyde from 4-hydroxyphenylacetate: step 4/7. It participates in aromatic compound metabolism; 4-hydroxyphenylacetate degradation; pyruvate and succinate semialdehyde from 4-hydroxyphenylacetate: step 5/7. Functionally, decarboxylates OPET (5-oxo-pent-3-ene-1,2,5-tricarboxylic acid) into HHDD (2-hydroxy-hept-2,4-diene-1,7-dioate) and isomerizes it to OHED (2-oxo-hept-3-ene-1,7-dioate). This chain is 4-hydroxyphenylacetate degradation bifunctional isomerase/decarboxylase (hpaG), found in Salmonella dublin.